Here is a 230-residue protein sequence, read N- to C-terminus: Ribosomal RNA small subunit methyltransferase G (230 aa).

S-adenosyl-L-methionine-binding positions include Gly93, Leu98, 144–145 (IE), and Arg158.

Belongs to the methyltransferase superfamily. RNA methyltransferase RsmG family.

The protein resides in the cytoplasm. It carries out the reaction guanosine(527) in 16S rRNA + S-adenosyl-L-methionine = N(7)-methylguanosine(527) in 16S rRNA + S-adenosyl-L-homocysteine. Specifically methylates the N7 position of guanine in position 527 of 16S rRNA. The protein is Ribosomal RNA small subunit methyltransferase G of Bordetella parapertussis (strain 12822 / ATCC BAA-587 / NCTC 13253).